Reading from the N-terminus, the 80-residue chain is Conotoxin Cl11.2 (80 aa).

An N-terminal signal peptide occupies residues 1 to 19; sequence MKMSVTFLLILMILPLFTG. A propeptide spanning residues 20 to 41 is cleaved from the precursor; the sequence is EWQSGSRLSALKKRLLEKRLLQ. 4 disulfides stabilise this stretch: Cys45/Cys59, Cys52/Cys63, Cys58/Cys68, and Cys62/Cys74.

The protein belongs to the conotoxin I1 superfamily. In terms of tissue distribution, expressed by the venom duct.

It is found in the secreted. This chain is Conotoxin Cl11.2, found in Californiconus californicus (California cone).